The primary structure comprises 322 residues: tRNA uridine(34) hydroxylase (322 aa).

Positions glutamine 125–glutamine 219 constitute a Rhodanese domain. The Cysteine persulfide intermediate role is filled by cysteine 179.

The protein belongs to the TrhO family.

The enzyme catalyses uridine(34) in tRNA + AH2 + O2 = 5-hydroxyuridine(34) in tRNA + A + H2O. Its function is as follows. Catalyzes oxygen-dependent 5-hydroxyuridine (ho5U) modification at position 34 in tRNAs. The sequence is that of tRNA uridine(34) hydroxylase from Bacillus velezensis (strain DSM 23117 / BGSC 10A6 / LMG 26770 / FZB42) (Bacillus amyloliquefaciens subsp. plantarum).